The following is a 421-amino-acid chain: UDP-N-acetylglucosamine 1-carboxyvinyltransferase (421 aa).

Residue 22–23 (KN) participates in phosphoenolpyruvate binding. R91 provides a ligand contact to UDP-N-acetyl-alpha-D-glucosamine. C115 serves as the catalytic Proton donor. A 2-(S-cysteinyl)pyruvic acid O-phosphothioketal modification is found at C115. UDP-N-acetyl-alpha-D-glucosamine contacts are provided by residues 120–124 (RPIDL), D306, and I328.

The protein belongs to the EPSP synthase family. MurA subfamily.

It is found in the cytoplasm. It carries out the reaction phosphoenolpyruvate + UDP-N-acetyl-alpha-D-glucosamine = UDP-N-acetyl-3-O-(1-carboxyvinyl)-alpha-D-glucosamine + phosphate. It participates in cell wall biogenesis; peptidoglycan biosynthesis. Functionally, cell wall formation. Adds enolpyruvyl to UDP-N-acetylglucosamine. This chain is UDP-N-acetylglucosamine 1-carboxyvinyltransferase, found in Methylacidiphilum infernorum (isolate V4) (Methylokorus infernorum (strain V4)).